Reading from the N-terminus, the 131-residue chain is Sulfurtransferase TusD (131 aa).

C81 (cysteine persulfide intermediate) is an active-site residue.

Belongs to the DsrE/TusD family. Heterohexamer, formed by a dimer of trimers. The hexameric TusBCD complex contains 2 copies each of TusB, TusC and TusD. The TusBCD complex interacts with TusE.

The protein resides in the cytoplasm. Functionally, part of a sulfur-relay system required for 2-thiolation of 5-methylaminomethyl-2-thiouridine (mnm(5)s(2)U) at tRNA wobble positions. Accepts sulfur from TusA and transfers it in turn to TusE. The polypeptide is Sulfurtransferase TusD (Yersinia pseudotuberculosis serotype O:1b (strain IP 31758)).